Consider the following 424-residue polypeptide: Histidine--tRNA ligase (424 aa).

Belongs to the class-II aminoacyl-tRNA synthetase family. Homodimer.

The protein resides in the cytoplasm. It catalyses the reaction tRNA(His) + L-histidine + ATP = L-histidyl-tRNA(His) + AMP + diphosphate + H(+). The chain is Histidine--tRNA ligase from Shewanella halifaxensis (strain HAW-EB4).